A 250-amino-acid polypeptide reads, in one-letter code: MWLTFNQVARRRRPLAPRRRRWRRRYWXRRRRIPANRRGHRTNRVYRFRFVREFGQVLQKGTGGSQLSFGTDGINIILDDFLDWGTINWRLPFEDYRIRLAKVEMRPLNESWEEWKGFGHNVPIQDNHLEDFFKKTRLDADPLANWDGARKWDLRKGFKRLFKPRPQLSVTDTDAANVTAALWLNNPKSLWIPIMKKSDQNLPSSGTRVKHYGLAFSWPEPTPNQMDYQVKVTIYCEFRQMNLTHLATPK.

A DNA-binding region spans residues 1-39; sequence MWLTFNQVARRRRPLAPRRRRWRRRYWXRRRRIPANRRG. Residues 9-42 are nuclear localization signals; that stretch reads ARRRRPLAPRRRRWRRRYWXRRRRIPANRRGHRT.

This sequence belongs to the circoviridae capsid protein family. In terms of assembly, homomultimer. Assembles in the nucleus, presumably in an immature form, then migrates to the cytoplasm once assembled as mature virion. Interacts with Rep; this interaction relocates Rep into the nucleus.

Its subcellular location is the host nucleus. The protein resides in the virion. In terms of biological role, self-assembles to form the virion icosahedral capsid with a T=1 symmetry. This very small capsid (17 - 22 nm in diameter) allows the virus to be very stable in the environment and resistant to some disinfectants, including detergents. Essential for the initial attachment to heparan sulfate moieties and chondroitin sulfate B of the host cell surface proteoglycans. After attachment, the virus is endocytosed and traffics to the nucleus. The capsid protein binds and transports the viral genome and Rep across the nuclear envelope. In Serinus (CaCV), this protein is Probable capsid protein (Cap).